A 715-amino-acid chain; its full sequence is Probable serine/threonine-protein kinase MARK-B (715 aa).

Positions 24–37 (SCSSNSTTSSSSNS) are enriched in low complexity. A disordered region spans residues 24–65 (SCSSNSTTSSSSNSPKQNKVSPGYRNKPQQQQHKKGHKMGNY). The 256-residue stretch at 65–320 (YLLGKTIGSG…LDEIKTHVWV (256 aa)) folds into the Protein kinase domain. ATP-binding positions include 71 to 79 (IGSGTSSKV) and lysine 94. The Proton acceptor role is filled by aspartate 187. Positions 335–344 (KVSDRLEKEQ) are enriched in basic and acidic residues. Disordered stretches follow at residues 335–399 (KVSD…IPQN) and 446–530 (CSAP…HHST). Low complexity predominate over residues 345–368 (QQQTPQHQQTQQQLQPQSQLQQHS). The span at 381–399 (IGSNRPLNQSSPNLTIPQN) shows a compositional bias: polar residues. 2 stretches are compositionally biased toward low complexity: residues 451–478 (SPHS…LSVS) and 487–513 (SSNP…INTS). Over residues 517 to 527 (QYHHHHHHQNH) the composition is skewed to basic residues. Residues 666–715 (LCPRNETINFEIEVCKVNGMDMYGIKFKRLSGDAWSYSSSCIKIVESLKL) enclose the KA1 domain.

Belongs to the protein kinase superfamily. CAMK Ser/Thr protein kinase family. SNF1 subfamily.

The catalysed reaction is L-seryl-[protein] + ATP = O-phospho-L-seryl-[protein] + ADP + H(+). The enzyme catalyses L-threonyl-[protein] + ATP = O-phospho-L-threonyl-[protein] + ADP + H(+). This is Probable serine/threonine-protein kinase MARK-B (mrkB) from Dictyostelium discoideum (Social amoeba).